We begin with the raw amino-acid sequence, 552 residues long: Glutamyl-tRNA reductase 1, chloroplastic (552 aa).

Residues 150–153 (TCNR), Ser210, 215–217 (EGQ), and Gln221 contribute to the substrate site. Catalysis depends on Cys151, which acts as the Nucleophile. 292-297 (GAGKMG) contacts NADP(+).

It belongs to the glutamyl-tRNA reductase family. Primarily in cotyledons and hypocotyls of greening cucumber seedlings.

The protein localises to the plastid. It is found in the chloroplast. The catalysed reaction is (S)-4-amino-5-oxopentanoate + tRNA(Glu) + NADP(+) = L-glutamyl-tRNA(Glu) + NADPH + H(+). The protein operates within porphyrin-containing compound metabolism; protoporphyrin-IX biosynthesis; 5-aminolevulinate from L-glutamyl-tRNA(Glu): step 1/2. Functionally, catalyzes the NADPH-dependent reduction of glutamyl-tRNA(Glu) to glutamate 1-semialdehyde (GSA). The chain is Glutamyl-tRNA reductase 1, chloroplastic (HEMA1) from Cucumis sativus (Cucumber).